Consider the following 318-residue polypeptide: Probable ABC transporter permease protein MG189 (318 aa).

6 consecutive transmembrane segments (helical) span residues 42–62 (VLGF…VVSF), 98–118 (AIVV…FFTI), 134–154 (LVWF…LIGQ), 169–189 (PLIV…GFMY), 230–250 (VGIL…LLLG), and 282–302 (LKMS…FLFH). Residues 99 to 301 (IVVNTLVTVL…LPMFIIYFLF (203 aa)) enclose the ABC transmembrane type-1 domain.

Belongs to the binding-protein-dependent transport system permease family. MalFG subfamily.

The protein resides in the cell membrane. In terms of biological role, probably part of a binding-protein-dependent transport system. Probably responsible for the translocation of the substrate across the membrane. The sequence is that of Probable ABC transporter permease protein MG189 from Mycoplasma genitalium (strain ATCC 33530 / DSM 19775 / NCTC 10195 / G37) (Mycoplasmoides genitalium).